Here is a 295-residue protein sequence, read N- to C-terminus: 4-diphosphocytidyl-2-C-methyl-D-erythritol kinase (295 aa).

Lysine 18 is an active-site residue. 101 to 111 provides a ligand contact to ATP; it reads PMGGGIGGGSS. The active site involves aspartate 143.

This sequence belongs to the GHMP kinase family. IspE subfamily.

It catalyses the reaction 4-CDP-2-C-methyl-D-erythritol + ATP = 4-CDP-2-C-methyl-D-erythritol 2-phosphate + ADP + H(+). It participates in isoprenoid biosynthesis; isopentenyl diphosphate biosynthesis via DXP pathway; isopentenyl diphosphate from 1-deoxy-D-xylulose 5-phosphate: step 3/6. Its function is as follows. Catalyzes the phosphorylation of the position 2 hydroxy group of 4-diphosphocytidyl-2C-methyl-D-erythritol. In Vibrio vulnificus (strain YJ016), this protein is 4-diphosphocytidyl-2-C-methyl-D-erythritol kinase.